The chain runs to 304 residues: Acetaldehyde dehydrogenase (304 aa).

C131 functions as the Acyl-thioester intermediate in the catalytic mechanism. NAD(+) is bound by residues 162–170 (SAGPGTRKN) and N273.

Belongs to the acetaldehyde dehydrogenase family.

The enzyme catalyses acetaldehyde + NAD(+) + CoA = acetyl-CoA + NADH + H(+). The protein is Acetaldehyde dehydrogenase of Polaromonas naphthalenivorans (strain CJ2).